Consider the following 527-residue polypeptide: Hopanoid C-2 methylase (527 aa).

One can recognise a B12-binding domain in the interval 36–148 (VAAFMPPQGL…AKLTHDVTRP (113 aa)). In terms of domain architecture, Radical SAM core spans 173 to 408 (AECSKYLLGS…HDQVVAMWKD (236 aa)). 3 residues coordinate [4Fe-4S] cluster: Cys189, Cys193, and Cys196.

This sequence belongs to the radical SAM superfamily. It depends on [4Fe-4S] cluster as a cofactor.

In terms of biological role, required for methylation of hopanoids at the C-2 position. The protein is Hopanoid C-2 methylase of Rhodopseudomonas palustris (strain TIE-1).